Reading from the N-terminus, the 517-residue chain is Crotonobetaine/carnitine--CoA ligase (517 aa).

Belongs to the ATP-dependent AMP-binding enzyme family.

It catalyses the reaction 4-(trimethylamino)butanoate + ATP + CoA = 4-(trimethylamino)butanoyl-CoA + AMP + diphosphate. The enzyme catalyses crotonobetaine + ATP + CoA = crotonobetainyl-CoA + AMP + diphosphate. The catalysed reaction is (R)-carnitine + ATP + CoA = (R)-carnitinyl-CoA + AMP + diphosphate. Its pathway is amine and polyamine metabolism; carnitine metabolism. In terms of biological role, catalyzes the transfer of CoA to carnitine, generating the initial carnitinyl-CoA needed for the CaiB reaction cycle. Also has activity toward crotonobetaine and gamma-butyrobetaine. This Escherichia coli O127:H6 (strain E2348/69 / EPEC) protein is Crotonobetaine/carnitine--CoA ligase.